Here is a 536-residue protein sequence, read N- to C-terminus: MWLRPSIWLCFPLCLALPGQSQPKAADDLGGLYCGPSSFHFSINLLSQDTATPPALVVWDRRGRLHKLQNDSGCGTWVHKGPGSSMGVEASYRGCYVTEWDSHYLMPIGLEEADAGGHRTVTETKLFKCPVDFLALDVPTIGLCDAVPVWDRLPCAPPPITQGECKQLGCCYNSEEVPSCYYGNTVTSRCTQDGHFSIAVSRNVTSPPLLWDSVHLAFRNDSECKPVMETHTFVLFRFPFSSCGTAKRVTGNQAVYENELVAARDVRTWSHGSITRDSIFRLRVSCIYSVSSSALPVNIQVFTLPPPLPETHPGPLTLELQIAKDERYGSYYNASDYPVVKLLREPIYVEVSIRHRTDPSLGLHLHQCWATPGMSPLLQPQWPMLVNGCPYTGDNYQTKLIPVQKASNLLFPSHYQRFSVSTFSFVDSVAKQALKGPVYLHCTASVCKPAGAPICVTTCPAARRRRSSDIHFQNGTASISSKGPMILLQATRDSSERLHKYSRPPVDSHALWVAGLLGSLIIGALLVSYLVFRKWR.

The signal sequence occupies residues 1 to 21 (MWLRPSIWLCFPLCLALPGQS). Topologically, residues 22 to 511 (QPKAADDLGG…SRPPVDSHAL (490 aa)) are extracellular. Asn-70 carries an N-linked (GlcNAc...) asparagine glycan. The 43-residue stretch at 142–184 (GLCDAVPVWDRLPCAPPPITQGECKQLGCCYNSEEVPSCYYGN) folds into the P-type domain. Residues 189–462 (RCTQDGHFSI…PICVTTCPAA (274 aa)) form the ZP domain. N-linked (GlcNAc...) asparagine glycosylation is found at Asn-203 and Asn-220. An O-linked (GalNAc...) serine glycan is attached at Ser-293. O-linked (GalNAc...) threonine glycosylation is present at Thr-303. Asn-333 carries an N-linked (GlcNAc...) asparagine glycan. Cys-368 and Cys-442 are disulfide-bonded. The propeptide at 463-536 (RRRRSSDIHF…VSYLVFRKWR (74 aa)) is removed in mature form. Asn-474 carries N-linked (GlcNAc...) asparagine glycosylation. A helical transmembrane segment spans residues 512–532 (WVAGLLGSLIIGALLVSYLVF). Residues 533–536 (RKWR) are Cytoplasmic-facing.

The protein belongs to the ZP domain family. ZPB subfamily. In terms of processing, proteolytically cleaved before the transmembrane segment to yield the secreted ectodomain incorporated in the zona pellucida. Disulfide bonds are formed between the cysteines of three consecutive regions: Cys-368 and Cys-389, Cys-442 and Cys-447, Cys-455 and Cys-459. Post-translationally, N-glycosylated; contains bi-, tri- and tetra-antennary glycans with N-acetyllactosamine repeats. In terms of processing, O-glycosylated; contains sulfate-substituted glycans. In terms of tissue distribution, expressed in oocytes.

Its subcellular location is the zona pellucida. It localises to the cell membrane. In terms of biological role, component of the zona pellucida, an extracellular matrix surrounding oocytes which mediates sperm binding, induction of the acrosome reaction and prevents post-fertilization polyspermy. The zona pellucida is composed of 3 to 4 glycoproteins, ZP1, ZP2, ZP3, and ZP4. ZP4 may act as a sperm receptor. The sequence is that of Zona pellucida sperm-binding protein 4 (ZP4) from Sus scrofa (Pig).